A 394-amino-acid polypeptide reads, in one-letter code: Phosphoglycerate kinase (394 aa).

Substrate contacts are provided by residues Asp21–Asn23, Arg36, His59–Arg62, Arg118, and Arg151. Ser183 is subject to Phosphoserine. Lys201 provides a ligand contact to ATP. Phosphothreonine is present on Thr299. ATP is bound by residues Asn316, Glu323, and Gly350–Ser353.

It belongs to the phosphoglycerate kinase family. Monomer.

The protein localises to the cytoplasm. It carries out the reaction (2R)-3-phosphoglycerate + ATP = (2R)-3-phospho-glyceroyl phosphate + ADP. It participates in carbohydrate degradation; glycolysis; pyruvate from D-glyceraldehyde 3-phosphate: step 2/5. This chain is Phosphoglycerate kinase, found in Geobacillus stearothermophilus (Bacillus stearothermophilus).